The following is a 288-amino-acid chain: Oxaloacetate decarboxylase (288 aa).

Residue Ser-47 coordinates substrate. Asp-85 is a Mg(2+) binding site. Substrate contacts are provided by Arg-156 and His-232.

Belongs to the isocitrate lyase/PEP mutase superfamily. Oxaloacetate decarboxylase family. Homotetramer; dimer of dimers. The cofactor is Mg(2+).

The catalysed reaction is oxaloacetate + H(+) = pyruvate + CO2. Functionally, catalyzes the decarboxylation of oxaloacetate into pyruvate. Seems to play a role in maintaining cellular concentrations of bicarbonate and pyruvate. This chain is Oxaloacetate decarboxylase, found in Rhodopseudomonas palustris (strain BisB18).